We begin with the raw amino-acid sequence, 313 residues long: Ribosomal RNA small subunit methyltransferase H (313 aa).

S-adenosyl-L-methionine-binding positions include 35 to 37, aspartate 55, phenylalanine 79, aspartate 101, and glutamine 108; that span reads GGH.

It belongs to the methyltransferase superfamily. RsmH family.

Its subcellular location is the cytoplasm. The catalysed reaction is cytidine(1402) in 16S rRNA + S-adenosyl-L-methionine = N(4)-methylcytidine(1402) in 16S rRNA + S-adenosyl-L-homocysteine + H(+). Functionally, specifically methylates the N4 position of cytidine in position 1402 (C1402) of 16S rRNA. The sequence is that of Ribosomal RNA small subunit methyltransferase H from Salmonella paratyphi A (strain ATCC 9150 / SARB42).